The primary structure comprises 375 residues: Trichodiene synthase (375 aa).

The protein belongs to the trichodiene synthase family.

The catalysed reaction is (2E,6E)-farnesyl diphosphate = trichodiene + diphosphate. It functions in the pathway sesquiterpene biosynthesis; trichothecene biosynthesis. TS is a member of the terpene cyclase group of enzymes. It catalyzes the isomerization and cyclization of farnesyl pyro-phosphate to form trichodiene, the first cyclic intermediate in the biosynthetic pathway for trichothecenes. It serves to branch trichothecene biosynthesis from the isoprenoid pathway. In Fusarium culmorum, this protein is Trichodiene synthase (TRI5).